The chain runs to 171 residues: Small ribosomal subunit protein uS13 (171 aa).

2 disordered regions span residues 1 to 22 (MGKA…AAKK) and 142 to 171 (RHEK…RKKE). Basic and acidic residues predominate over residues 10–22 (KSDKEAAKPAAKK). A compositionally biased stretch (basic residues) spans 142-158 (RHEKGKKVRGQRTRSNG).

This sequence belongs to the universal ribosomal protein uS13 family. In terms of assembly, part of the 30S ribosomal subunit. Forms a loose heterodimer with protein S19. Forms two bridges to the 50S subunit in the 70S ribosome.

In terms of biological role, located at the top of the head of the 30S subunit, it contacts several helices of the 16S rRNA. In the 70S ribosome it contacts the 23S rRNA (bridge B1a) and protein L5 of the 50S subunit (bridge B1b), connecting the 2 subunits; these bridges are implicated in subunit movement. The chain is Small ribosomal subunit protein uS13 from Thermoplasma volcanium (strain ATCC 51530 / DSM 4299 / JCM 9571 / NBRC 15438 / GSS1).